Reading from the N-terminus, the 76-residue chain is Small ribosomal subunit protein bS18 (76 aa).

This sequence belongs to the bacterial ribosomal protein bS18 family. As to quaternary structure, part of the 30S ribosomal subunit. Forms a tight heterodimer with protein bS6.

In terms of biological role, binds as a heterodimer with protein bS6 to the central domain of the 16S rRNA, where it helps stabilize the platform of the 30S subunit. The polypeptide is Small ribosomal subunit protein bS18 (Nitrosomonas europaea (strain ATCC 19718 / CIP 103999 / KCTC 2705 / NBRC 14298)).